The following is a 453-amino-acid chain: Alpha-2B adrenergic receptor (453 aa).

At 1–17 (MSGPTMDHQEPYSVQAT) the chain is on the extracellular side. A helical transmembrane segment spans residues 18–42 (AAIASAITFLILFTIFGNALVILAV). Residues 43-54 (LTSRSLRAPQNL) are Cytoplasmic-facing. A helical transmembrane segment spans residues 55–80 (FLVSLAAADILVATLIIPFSLANELL). Residues 81–90 (GYWYFWRAWC) lie on the Extracellular side of the membrane. Cys-90 and Cys-169 are oxidised to a cystine. Residues 91 to 113 (EVYLALDVLFCTSSIVHLCAISL) traverse the membrane as a helical segment. Topologically, residues 114–135 (DRYWAVSRALEYNSKRTPRRIK) are cytoplasmic. A helical transmembrane segment spans residues 136 to 158 (CIILTVWLIAAVISLPPLIYKGD). The Extracellular portion of the chain corresponds to 159 to 174 (QRPEPRGLPQCELNQE). Residues 175–198 (AWYILASSIGSFFAPCLIMILVYL) form a helical membrane-spanning segment. Topologically, residues 199 to 375 (RIYVIAKRSH…LSREKRFTFV (177 aa)) are cytoplasmic. The disordered stretch occupies residues 213–331 (GAKRGSGEGE…PASVCNPPLQ (119 aa)). Residues 287 to 297 (GQGQKKGTSGA) are compositionally biased toward polar residues. The span at 300–314 (EEGDEEDEEEVEECE) shows a compositional bias: acidic residues. Residues 376–399 (LAVVIGVFVVCWFPFFFSYSLGAI) traverse the membrane as a helical segment. Residues 400 to 408 (CPQHCKVPH) are Extracellular-facing. A helical membrane pass occupies residues 409 to 432 (GLFQFFFWIGYCNSSLNPVIYTVF). Over 433-453 (NQDFRRAFRRILCRPWTQTGW) the chain is Cytoplasmic. The S-palmitoyl cysteine moiety is linked to residue Cys-445.

It belongs to the G-protein coupled receptor 1 family. Adrenergic receptor subfamily. ADRA2B sub-subfamily. Interacts with RAB26. Interacts with PPP1R9B. Interacts with GGA1, GGA2 and GGA3.

The protein resides in the cell membrane. Functionally, alpha-2 adrenergic receptors mediate the catecholamine-induced inhibition of adenylate cyclase through the action of G proteins. The protein is Alpha-2B adrenergic receptor (Adra2b) of Rattus norvegicus (Rat).